The sequence spans 441 residues: ATP-dependent protease ATPase subunit HslU (441 aa).

ATP contacts are provided by residues I18, 60-65, D254, E319, and R391; that span reads GVGKTE.

The protein belongs to the ClpX chaperone family. HslU subfamily. As to quaternary structure, a double ring-shaped homohexamer of HslV is capped on each side by a ring-shaped HslU homohexamer. The assembly of the HslU/HslV complex is dependent on binding of ATP.

It is found in the cytoplasm. In terms of biological role, ATPase subunit of a proteasome-like degradation complex; this subunit has chaperone activity. The binding of ATP and its subsequent hydrolysis by HslU are essential for unfolding of protein substrates subsequently hydrolyzed by HslV. HslU recognizes the N-terminal part of its protein substrates and unfolds these before they are guided to HslV for hydrolysis. In Shewanella woodyi (strain ATCC 51908 / MS32), this protein is ATP-dependent protease ATPase subunit HslU.